The primary structure comprises 282 residues: MHSARLDSFLSQLRWELLCARDTGSPPMSGPLQPKPRTDQNVQPKRQFRASDVLEEDSVCCVEEEEEEGLVAEDKGLPLGCPREHALDWDSGFSEVSGSTWREEEPSVPQRQAPRERPPHSQRFSVSDIPMRSRAAVTNIPPAHRPRPKSTPDACLEHWQGLEAEDWTAALLNRGRSRQPLVLGDNCFADLVHNWMELPEATSEGSDGDVPRARARPPQFLLGLSEQLRRRLARARRTAMASKRLSCPPRSEPDLPADISRFAALMNCRSRQPIIYNDVSYL.

Disordered stretches follow at residues 21–50 and 92–127; these read RDTG…QFRA and GFSE…FSVS. Inka box regions lie at residues 163–200 and 256–282; these read EAED…ELPE and PADI…VSYL.

The protein belongs to the INKA family. In terms of assembly, interacts with PAK4. Expressed in tissues of the developing head during neurulation.

It localises to the nucleus. It is found in the cytoplasm. Inhibitor of the serine/threonine-protein kinase PAK4. Acts by binding PAK4 in a substrate-like manner, inhibiting the protein kinase activity. In Mus musculus (Mouse), this protein is PAK4-inhibitor INKA1.